The following is a 171-amino-acid chain: MRHNKHRASLGVTVEHRRAMLSNLAAALITHGRIETTLVKAKALRPFVEKVITKAKQAAAKTDKKDALHLRRLAQSDVRDETAVTKLFNETYKEFANRNGGYTRIYKLGPQRIGDAAEMALIEFVKADDPGYKKSKGKKATKAKGKKAKATPAAEAAAAATTEAAPAEEKK.

The tract at residues 130-171 (PGYKKSKGKKATKAKGKKAKATPAAEAAAAATTEAAPAEEKK) is disordered. A compositionally biased stretch (basic residues) spans 133–149 (KKSKGKKATKAKGKKAK). Low complexity predominate over residues 150-165 (ATPAAEAAAAATTEAA).

It belongs to the bacterial ribosomal protein bL17 family. In terms of assembly, part of the 50S ribosomal subunit. Contacts protein L32.

The chain is Large ribosomal subunit protein bL17 from Opitutus terrae (strain DSM 11246 / JCM 15787 / PB90-1).